Here is a 425-residue protein sequence, read N- to C-terminus: Serine--tRNA ligase (425 aa).

233–235 (TAE) contributes to the L-serine binding site. 264 to 266 (RAE) lines the ATP pocket. L-serine is bound at residue glutamate 287. 351–354 (EISS) lines the ATP pocket. Position 387 (serine 387) interacts with L-serine.

The protein belongs to the class-II aminoacyl-tRNA synthetase family. Type-1 seryl-tRNA synthetase subfamily. As to quaternary structure, homodimer. The tRNA molecule binds across the dimer.

Its subcellular location is the cytoplasm. It catalyses the reaction tRNA(Ser) + L-serine + ATP = L-seryl-tRNA(Ser) + AMP + diphosphate + H(+). It carries out the reaction tRNA(Sec) + L-serine + ATP = L-seryl-tRNA(Sec) + AMP + diphosphate + H(+). It functions in the pathway aminoacyl-tRNA biosynthesis; selenocysteinyl-tRNA(Sec) biosynthesis; L-seryl-tRNA(Sec) from L-serine and tRNA(Sec): step 1/1. Catalyzes the attachment of serine to tRNA(Ser). Is also able to aminoacylate tRNA(Sec) with serine, to form the misacylated tRNA L-seryl-tRNA(Sec), which will be further converted into selenocysteinyl-tRNA(Sec). The protein is Serine--tRNA ligase of Clostridium botulinum (strain Eklund 17B / Type B).